The chain runs to 344 residues: Heat-inducible transcription repressor HrcA (344 aa).

It belongs to the HrcA family.

In terms of biological role, negative regulator of class I heat shock genes (grpE-dnaK-dnaJ and groELS operons). Prevents heat-shock induction of these operons. This Streptococcus pneumoniae (strain P1031) protein is Heat-inducible transcription repressor HrcA.